The following is a 680-amino-acid chain: WD repeat-containing protein 48 homolog (680 aa).

8 WD repeats span residues 26–65, 71–110, 113–152, 164–203, 206–245, 248–287, 290–329, and 350–389; these read QHRNGVNALQLDANNGKLYSAGRDAIIRVWNTRTDSSEKY, HHNDWVNDIVLCCNGRNLISASCDTTVKVWNAQKGFCMST, THRDYVQALAYAKDREQVASAGLDKAIFLWDVNTLTALTA, GSKDSIYSLAMNPSGTVIVSGSTENILRIWDPRTCMRSMK, GHTENVRCLVVSPDGNQVVSGSSDGTIKVWNLGQQRCVQT, VHKEGVWSLLMSENFQYIISGSRDRNIIVTEMRNPSNKTL, EEQAPVLSLGYNIDKTGVWATTWNSDIRCWKLPMYDRCTM, and KGGAAIKECAVLNDKRYIITKDSQDQVVVYDVLRVVKKEQ. Positions 592–616 are disordered; it reads ETTPSGGNANNSLQNSQSDANSEGS.

This sequence belongs to the WD repeat WDR48 family. As to quaternary structure, catalytic component of the Usp12-46 deubiquitylase complex consisting of Usp12-46, Wdr20 and Uaf1; regulatory subunit that, together wtih Wdr20, stabilizes Usp12-46. The Usp12-46 deubiquitylase complex associates with arr/arrow; the interaction leads to deubiquitination and stabilization of arr/arrow.

In terms of biological role, regulatory component of the Usp12-46 deubiquitylase complex. activates deubiquitination by increasing the catalytic turnover without increasing the affinity of deubiquitinating enzymes for the substrate. The complex deubiquitylates the wg/wingless-signaling receptor arr/arrow, which stabilizes the receptor and increases its concentration at the cell surface; this enhances the sensitivity of cells to wg/wingless-signal stimulation. This increases the amplitude and spatial range of the signaling response to the wg/wingless morphogen gradient, facilitating the precise concentration-dependent regulation of its target genes. Together with Wdr20 and Usp12-46 required for wg/wingless-mediated signaling in the wing imaginal disc and for wg/wingless-dependent regulation of intestinal stem cell proliferation. This is WD repeat-containing protein 48 homolog from Drosophila erecta (Fruit fly).